Here is a 1052-residue protein sequence, read N- to C-terminus: Error-prone DNA polymerase (1052 aa).

This sequence belongs to the DNA polymerase type-C family. DnaE2 subfamily.

It localises to the cytoplasm. It catalyses the reaction DNA(n) + a 2'-deoxyribonucleoside 5'-triphosphate = DNA(n+1) + diphosphate. Its function is as follows. DNA polymerase involved in damage-induced mutagenesis and translesion synthesis (TLS). It is not the major replicative DNA polymerase. This Bordetella parapertussis (strain 12822 / ATCC BAA-587 / NCTC 13253) protein is Error-prone DNA polymerase.